The sequence spans 260 residues: UPF0246 protein Bcep1808_2308 (260 aa).

This sequence belongs to the UPF0246 family.

The sequence is that of UPF0246 protein Bcep1808_2308 from Burkholderia vietnamiensis (strain G4 / LMG 22486) (Burkholderia cepacia (strain R1808)).